The sequence spans 207 residues: Alpha-1-acid glycoprotein 8 (207 aa).

The N-terminal stretch at 1–18 is a signal peptide; that stretch reads MALHTVLIMLSLLPMLEA. 5 N-linked (GlcNAc...) asparagine glycosylation sites follow: asparagine 25, asparagine 34, asparagine 76, asparagine 94, and asparagine 104. Cysteine 91 and cysteine 184 are joined by a disulfide.

The protein belongs to the calycin superfamily. Lipocalin family. Expressed by the liver and secreted in plasma.

The protein localises to the secreted. Functions as a transport protein in the blood stream. Binds various ligands in the interior of its beta-barrel domain. Appears to function in modulating the activity of the immune system during the acute-phase reaction. This chain is Alpha-1-acid glycoprotein 8 (Orm8), found in Mus caroli (Ryukyu mouse).